Reading from the N-terminus, the 396-residue chain is 8-amino-7-oxononanoate synthase (396 aa).

R31 provides a ligand contact to substrate. G118 to Y119 is a pyridoxal 5'-phosphate binding site. H143 provides a ligand contact to substrate. Positions 189, 217, and 245 each coordinate pyridoxal 5'-phosphate. K248 is subject to N6-(pyridoxal phosphate)lysine. Substrate is bound at residue T362.

The protein belongs to the class-II pyridoxal-phosphate-dependent aminotransferase family. BioF subfamily. In terms of assembly, homodimer. It depends on pyridoxal 5'-phosphate as a cofactor.

The enzyme catalyses 6-carboxyhexanoyl-[ACP] + L-alanine + H(+) = (8S)-8-amino-7-oxononanoate + holo-[ACP] + CO2. It participates in cofactor biosynthesis; biotin biosynthesis. Functionally, catalyzes the decarboxylative condensation of pimeloyl-[acyl-carrier protein] and L-alanine to produce 8-amino-7-oxononanoate (AON), [acyl-carrier protein], and carbon dioxide. In Methylobacillus flagellatus (strain ATCC 51484 / DSM 6875 / VKM B-1610 / KT), this protein is 8-amino-7-oxononanoate synthase.